The primary structure comprises 314 residues: DNA-directed RNA polymerase subunit alpha (314 aa).

The segment at 1-228 (MAQFQIECVE…NLFIPLKDLN (228 aa)) is alpha N-terminal domain (alpha-NTD). Positions 243–314 (PESQIPIEEL…ITLPHEKAKA (72 aa)) are alpha C-terminal domain (alpha-CTD).

Belongs to the RNA polymerase alpha chain family. In terms of assembly, homodimer. In cyanobacteria the RNAP catalytic core is composed of 2 alpha, 1 beta, 1 beta', 1 gamma and 1 omega subunit. When a sigma factor is associated with the core the holoenzyme is formed, which can initiate transcription.

The catalysed reaction is RNA(n) + a ribonucleoside 5'-triphosphate = RNA(n+1) + diphosphate. DNA-dependent RNA polymerase catalyzes the transcription of DNA into RNA using the four ribonucleoside triphosphates as substrates. This Synechocystis sp. (strain ATCC 27184 / PCC 6803 / Kazusa) protein is DNA-directed RNA polymerase subunit alpha.